Reading from the N-terminus, the 1070-residue chain is Duffy receptor (1070 aa).

An N-terminal signal peptide occupies residues 1–20; the sequence is MKGKNRSLFVLLVLLLLHKV. At 21-1007 the chain is on the extracellular side; sequence NNVLLERTIE…CFTKGGFKDK (987 aa). Residues 116–146 are disordered; that stretch reads YMEGKDGGDKTGEEKDGEHKTDSKTDNGKGA. Positions 118–142 are enriched in basic and acidic residues; that stretch reads EGKDGGDKTGEEKDGEHKTDSKTDN. N-linked (GlcNAc...) asparagine glycosylation is present at Asn-183. Residues 211–521 are pvRII region; mediates ACKR1 binding; sequence NTVMKNCNYK…AKKNTQEVVT (311 aa). Cystine bridges form between Cys-217/Cys-246 and Cys-230/Cys-237. N-linked (GlcNAc...) asparagine glycosylation is found at Asn-255, Asn-351, and Asn-420. 4 cysteine pairs are disulfide-bonded: Cys-300–Cys-377, Cys-415–Cys-432, Cys-427–Cys-507, and Cys-436–Cys-505. Composition is skewed to polar residues over residues 525 to 542, 554 to 569, and 629 to 642; these read NAAKSQATNSNPISQPVD, THGNVNSGQDSSTTGK, and GASNSRPSESTVEA. A disordered region spans residues 525 to 906; that stretch reads NAAKSQATNS…HLNSNNNLSN (382 aa). A compositionally biased stretch (basic and acidic residues) spans 697–711; sequence ETGKGQDNDMAKATK. Over residues 712–728 the composition is skewed to low complexity; it reads DSSNSSDGTSSATGDTT. Residue Asn-715 is glycosylated (N-linked (GlcNAc...) asparagine). A compositionally biased stretch (basic and acidic residues) spans 730 to 748; that stretch reads AVDREINKGVPEDRDKTVG. N-linked (GlcNAc...) asparagine glycosylation occurs at Asn-787. Over residues 808–817 the composition is skewed to low complexity; that stretch reads LSKTESLEST. N-linked (GlcNAc...) asparagine glycosylation is present at Asn-825. 2 stretches are compositionally biased toward basic and acidic residues: residues 835 to 849 and 865 to 889; these read NGGKEKDLQKHDFKS and AEGHDRDSIKNDKAERRKHMNKDTF. Residues 895–906 are compositionally biased toward low complexity; that stretch reads SHHLNSNNNLSN. N-linked (GlcNAc...) asparagine glycosylation is found at Asn-903 and Asn-938. The chain crosses the membrane as a helical span at residues 1008–1025; sequence TYFAAAGALLILLLLIAS. Over 1026–1070 the chain is Cytoplasmic; sequence RKMIKNDSEEATFNEFEEYCDNIHRIPLMPNNIEHMQPSTPLDYS.

In terms of assembly, homodimer; dimerization (via PvRII region) is promoted by the interaction with human ACKR1. Interacts (via PvRII region) with human ACKR1 (via N-terminal extracellular domain).

It is found in the membrane. In terms of biological role, binds to the human erythrocyte Duffy blood group determinant (ACKR1). The polypeptide is Duffy receptor (PVDR) (Plasmodium vivax (strain Salvador I)).